Reading from the N-terminus, the 148-residue chain is Endoribonuclease YbeY (148 aa).

3 residues coordinate Zn(2+): histidine 105, histidine 109, and aspartate 115.

It belongs to the endoribonuclease YbeY family. It depends on Zn(2+) as a cofactor.

The protein localises to the cytoplasm. In terms of biological role, single strand-specific metallo-endoribonuclease involved in late-stage 70S ribosome quality control and in maturation of the 3' terminus of the 16S rRNA. This Chlorobium phaeovibrioides (strain DSM 265 / 1930) (Prosthecochloris vibrioformis (strain DSM 265)) protein is Endoribonuclease YbeY.